Here is a 277-residue protein sequence, read N- to C-terminus: Ethanolamine ammonia-lyase small subunit (277 aa).

Adenosylcob(III)alamin is bound by residues Val-164, Glu-185, and Cys-214.

Belongs to the EutC family. In terms of assembly, the basic unit is a heterodimer which dimerizes to form tetramers. The heterotetramers trimerize; 6 large subunits form a core ring with 6 small subunits projecting outwards. It depends on adenosylcob(III)alamin as a cofactor.

The protein localises to the bacterial microcompartment. It carries out the reaction ethanolamine = acetaldehyde + NH4(+). Its pathway is amine and polyamine degradation; ethanolamine degradation. Catalyzes the deamination of various vicinal amino-alcohols to oxo compounds. Allows this organism to utilize ethanolamine as the sole source of nitrogen and carbon in the presence of external vitamin B12. The protein is Ethanolamine ammonia-lyase small subunit of Pseudomonas fluorescens (strain SBW25).